A 59-amino-acid polypeptide reads, in one-letter code: DNA gyrase inhibitor YacG (59 aa).

Cys-9, Cys-12, Cys-27, and Cys-31 together coordinate Zn(2+).

It belongs to the DNA gyrase inhibitor YacG family. In terms of assembly, interacts with GyrB. It depends on Zn(2+) as a cofactor.

Functionally, inhibits all the catalytic activities of DNA gyrase by preventing its interaction with DNA. Acts by binding directly to the C-terminal domain of GyrB, which probably disrupts DNA binding by the gyrase. The protein is DNA gyrase inhibitor YacG of Geotalea daltonii (strain DSM 22248 / JCM 15807 / FRC-32) (Geobacter daltonii).